A 416-amino-acid polypeptide reads, in one-letter code: Major royal jelly protein 8 (416 aa).

The N-terminal stretch at 1–16 is a signal peptide; that stretch reads MIRWLLLMYLGITCQG. 8 N-linked (GlcNAc...) asparagine glycosylation sites follow: Asn-24, Asn-58, Asn-93, Asn-115, Asn-158, Asn-175, Asn-196, and Asn-215.

The protein belongs to the major royal jelly protein family. Expressed at very low levels in the hypopharyngeal glands of worker honey bees (at protein level). Secreted into bee venom in the sting apparatus (at protein level). Expressed in the spermatheca of adult queen bees (at protein level); expression levels are higher in mated queens than in virgin queens. Along with Mrjp9 expressed at very low levels in the head of worker bees compared to other major royal jelly proteins.

It is found in the secreted. Its function is as follows. Component of bee sting venom. Component of royal jelly, a substance produced in the hypopharyngeal gland containing proteins, free amino acids, fatty acids, sugars and other nutrients, which is fed to developing larvae by worker nurse bees; may be present only at trace levels. All larvae are fed some royal jelly (also known as worker jelly) early in their development but it forms the principal source of nutrition for larvae destined to become queen bees. Produced in the spermatheca of adult queen bees, along with other major royal jelly proteins, where it may act as a nutrient supply for sperm stored by mated queens, or be involved in energy metabolism. This Apis mellifera (Honeybee) protein is Major royal jelly protein 8.